The sequence spans 281 residues: Probable endonuclease 4 (281 aa).

Residues H69, H109, E145, D179, H182, H216, D229, H231, and E261 each coordinate Zn(2+).

It belongs to the AP endonuclease 2 family. Zn(2+) is required as a cofactor.

The catalysed reaction is Endonucleolytic cleavage to 5'-phosphooligonucleotide end-products.. Endonuclease IV plays a role in DNA repair. It cleaves phosphodiester bonds at apurinic or apyrimidinic (AP) sites, generating a 3'-hydroxyl group and a 5'-terminal sugar phosphate. The sequence is that of Probable endonuclease 4 from Aeromonas hydrophila subsp. hydrophila (strain ATCC 7966 / DSM 30187 / BCRC 13018 / CCUG 14551 / JCM 1027 / KCTC 2358 / NCIMB 9240 / NCTC 8049).